The chain runs to 263 residues: Small ribosomal subunit protein eS4, Y isoform 2 (263 aa).

An S4 RNA-binding domain is found at 42–104 (LPLIVFLRNR…TGEHFRLVYD (63 aa)).

It belongs to the eukaryotic ribosomal protein eS4 family.

The polypeptide is Small ribosomal subunit protein eS4, Y isoform 2 (RPS4Y2) (Pan troglodytes (Chimpanzee)).